Reading from the N-terminus, the 133-residue chain is S-adenosylmethionine decarboxylase proenzyme (133 aa).

S65 acts as the Schiff-base intermediate with substrate; via pyruvic acid in catalysis. A Pyruvic acid (Ser); by autocatalysis modification is found at S65. H70 (proton acceptor; for processing activity) is an active-site residue. C85 acts as the Proton donor; for catalytic activity in catalysis.

Belongs to the prokaryotic AdoMetDC family. Type 1 subfamily. In terms of assembly, heterotetramer of two alpha and two beta chains arranged as a dimer of alpha/beta heterodimers. Pyruvate serves as cofactor. In terms of processing, is synthesized initially as an inactive proenzyme. Formation of the active enzyme involves a self-maturation process in which the active site pyruvoyl group is generated from an internal serine residue via an autocatalytic post-translational modification. Two non-identical subunits are generated from the proenzyme in this reaction, and the pyruvate is formed at the N-terminus of the alpha chain, which is derived from the carboxyl end of the proenzyme. The post-translation cleavage follows an unusual pathway, termed non-hydrolytic serinolysis, in which the side chain hydroxyl group of the serine supplies its oxygen atom to form the C-terminus of the beta chain, while the remainder of the serine residue undergoes an oxidative deamination to produce ammonia and the pyruvoyl group blocking the N-terminus of the alpha chain.

The catalysed reaction is S-adenosyl-L-methionine + H(+) = S-adenosyl 3-(methylsulfanyl)propylamine + CO2. Its pathway is amine and polyamine biosynthesis; S-adenosylmethioninamine biosynthesis; S-adenosylmethioninamine from S-adenosyl-L-methionine: step 1/1. Functionally, catalyzes the decarboxylation of S-adenosylmethionine to S-adenosylmethioninamine (dcAdoMet), the propylamine donor required for the synthesis of the polyamines spermine and spermidine from the diamine putrescine. The protein is S-adenosylmethionine decarboxylase proenzyme of Brevibacillus brevis (strain 47 / JCM 6285 / NBRC 100599).